Here is a 664-residue protein sequence, read N- to C-terminus: Methionine--tRNA ligase (664 aa).

The short motif at 13-23 (PYTNGPCHIGH) is the 'HIGH' region element. Residues cysteine 144, cysteine 147, cysteine 156, and cysteine 160 each coordinate Zn(2+). The 'KMSKS' region signature appears at 327-331 (KFSKS). Lysine 330 provides a ligand contact to ATP. In terms of domain architecture, tRNA-binding spans 566–664 (EFGNLDIRIA…RPVKPGTKIR (99 aa)).

The protein belongs to the class-I aminoacyl-tRNA synthetase family. MetG type 1 subfamily. As to quaternary structure, homodimer. It depends on Zn(2+) as a cofactor.

The protein resides in the cytoplasm. The catalysed reaction is tRNA(Met) + L-methionine + ATP = L-methionyl-tRNA(Met) + AMP + diphosphate. Functionally, is required not only for elongation of protein synthesis but also for the initiation of all mRNA translation through initiator tRNA(fMet) aminoacylation. The protein is Methionine--tRNA ligase of Methanoculleus marisnigri (strain ATCC 35101 / DSM 1498 / JR1).